We begin with the raw amino-acid sequence, 225 residues long: Membrane protein (225 aa).

The Virion surface segment spans residues 1–20 (MPNETNCTLDFEQSVQLFKE). Residues 21-41 (YNLFITAFLLFLTIILQYGYA) traverse the membrane as a helical segment. Residues 42–51 (TRTKVIYTLK) lie on the Intravirion side of the membrane. The chain crosses the membrane as a helical span at residues 52–72 (MIVLWCFWPLNIAVGVISCTY). The Virion surface portion of the chain corresponds to 73-77 (PPNTG). Residues 78-98 (GLVVAIILTVFACLSFVGYWI) traverse the membrane as a helical segment. Residues 99–225 (QSIRLFKRCR…VATGGSSLYT (127 aa)) are Intravirion-facing.

The protein belongs to the gammacoronaviruses M protein family. Homomultimer. Interacts with envelope E protein in the budding compartment of the host cell, which is located between endoplasmic reticulum and the Golgi complex. Forms a complex with HE and S proteins. Interacts with nucleocapsid N protein. This interaction probably participates in RNA packaging into the virus.

Its subcellular location is the virion membrane. It is found in the host Golgi apparatus membrane. Its function is as follows. Component of the viral envelope that plays a central role in virus morphogenesis and assembly via its interactions with other viral proteins. This Avian infectious bronchitis virus (strain Beaudette US) (IBV) protein is Membrane protein.